The primary structure comprises 602 residues: Glutamyl-tRNA(Gln) amidotransferase subunit B, mitochondrial (602 aa).

The N-terminal 56 residues, 1–56 (MFRSCLRHCRRATVRSRTCPRCSHHEIPQLQVVQRQISLSSSFPHIRRLQTSSTDT), are a transit peptide targeting the mitochondrion.

Belongs to the GatB/GatE family. GatB subfamily. In terms of assembly, subunit of the heterotrimeric GatCAB amidotransferase (AdT) complex, composed of A, B and C subunits.

Its subcellular location is the mitochondrion. The catalysed reaction is L-glutamyl-tRNA(Gln) + L-glutamine + ATP + H2O = L-glutaminyl-tRNA(Gln) + L-glutamate + ADP + phosphate + H(+). Functionally, allows the formation of correctly charged Gln-tRNA(Gln) through the transamidation of misacylated Glu-tRNA(Gln) in the mitochondria. The reaction takes place in the presence of glutamine and ATP through an activated gamma-phospho-Glu-tRNA(Gln). The sequence is that of Glutamyl-tRNA(Gln) amidotransferase subunit B, mitochondrial (nempA) from Emericella nidulans (strain FGSC A4 / ATCC 38163 / CBS 112.46 / NRRL 194 / M139) (Aspergillus nidulans).